Consider the following 206-residue polypeptide: Cytochrome c oxidase assembly factor 8 (206 aa).

A mitochondrion-targeting transit peptide spans 1–39; the sequence is MLPCAAGARGRGAMVVLRAGKKTFLPPLCRAFACRGCQL.

Belongs to the COA8 family. Post-translationally, N-terminal mitochondrial targeting sequence is cleaved from the mature protein once in the mitochondrion. In terms of processing, in normal conditions, the cytoplasmic precursor protein is rapidly degraded by the ubiquitination-proteasome system (UPS). Oxidative stress induces protein stabilization and import into mitochondria where it protects COX from degradation. As to expression, expressed in fibroblasts.

The protein resides in the mitochondrion inner membrane. Its function is as follows. Required for cytochrome c complex (COX) IV assembly and function Protects COX assembly from oxidation-induced degradation, COX being the terminal component of the mitochondrial respiratory chain. The protein is Cytochrome c oxidase assembly factor 8 of Homo sapiens (Human).